The chain runs to 829 residues: Cap-specific mRNA (nucleoside-2'-O-)-methyltransferase 1 (829 aa).

The disordered stretch occupies residues 1–68 (MKRAAQASDE…DSQNSQGSMA (68 aa)). A Bipartite nuclear localization signal motif is present at residues 2–16 (KRAAQASDEPLKKRK). The span at 31-44 (QRTTSQDSSQSESL) shows a compositional bias: low complexity. Residues 55–68 (SRPSDSQNSQGSMA) show a composition bias toward polar residues. One can recognise a G-patch domain in the interval 79-125 (YNNVSQKLMAKMGFREGEGLGKYGQGRKEIVEASTQRGRRGLGLMLK). Substrate contacts are provided by residues 195-199 (KTVFD) and Arg210. The 220-residue stretch at 223–442 (FFLNRAAMKM…ERYVVCKGLK (220 aa)) folds into the RrmJ-type SAM-dependent 2'-O-MTase domain. Asn226 provides a ligand contact to S-adenosyl-L-methionine. Lys231 is an active-site residue. Residues 269–275 (CAGPGGF) and 327–328 (DI) each bind S-adenosyl-L-methionine. Residue Asp356 is part of the active site. Residue 366–368 (NLQ) coordinates substrate. The active-site Proton acceptor is Lys396. Asn431 is a substrate binding site. The 35-residue stretch at 745–779 (KTVNDPWTMAFSKSSKRKFFYNKQTKESTYDLPAT) folds into the WW domain.

It is found in the nucleus. The enzyme catalyses a 5'-end (N(7)-methyl 5'-triphosphoguanosine)-ribonucleoside in mRNA + S-adenosyl-L-methionine = a 5'-end (N(7)-methyl 5'-triphosphoguanosine)-(2'-O-methyl-ribonucleoside) in mRNA + S-adenosyl-L-homocysteine + H(+). Its function is as follows. S-adenosyl-L-methionine-dependent methyltransferase that mediates mRNA cap1 2'-O-ribose methylation to the 5'-cap structure of mRNAs. Methylates the ribose of the first nucleotide of a m(7)GpppG-capped mRNA and small nuclear RNA (snRNA) to produce m(7)GpppRm (cap1). Displays a preference for cap0 transcripts. Cap1 modification is linked to higher levels of translation. May be involved in the interferon response pathway. In Danio rerio (Zebrafish), this protein is Cap-specific mRNA (nucleoside-2'-O-)-methyltransferase 1 (cmtr1).